A 566-amino-acid chain; its full sequence is Glutamate--tRNA ligase (566 aa).

Positions 93–103 (PNPDYTIHLGN) match the 'HIGH' region motif.

The protein belongs to the class-I aminoacyl-tRNA synthetase family. Glutamate--tRNA ligase type 2 subfamily.

Its subcellular location is the cytoplasm. It catalyses the reaction tRNA(Glu) + L-glutamate + ATP = L-glutamyl-tRNA(Glu) + AMP + diphosphate. Functionally, catalyzes the attachment of glutamate to tRNA(Glu) in a two-step reaction: glutamate is first activated by ATP to form Glu-AMP and then transferred to the acceptor end of tRNA(Glu). This is Glutamate--tRNA ligase from Staphylothermus marinus (strain ATCC 43588 / DSM 3639 / JCM 9404 / F1).